The following is a 188-amino-acid chain: uncharacterized protein (188 aa).

This is an uncharacterized protein from Saccharomyces cerevisiae (strain ATCC 204508 / S288c) (Baker's yeast).